We begin with the raw amino-acid sequence, 815 residues long: DNA gyrase subunit B (815 aa).

Residues 1 to 21 (MEKTPATGSAVAPPPVEYGTD) are disordered. Residues 430–545 (SELYIVEGDS…AISTSRSRRS (116 aa)) form the Toprim domain. 3 residues coordinate Mg(2+): Glu436, Asp509, and Asp511.

This sequence belongs to the type II topoisomerase GyrB family. Heterotetramer, composed of two GyrA and two GyrB chains. In the heterotetramer, GyrA contains the active site tyrosine that forms a transient covalent intermediate with DNA, while GyrB binds cofactors and catalyzes ATP hydrolysis. Mg(2+) serves as cofactor. Requires Mn(2+) as cofactor. Ca(2+) is required as a cofactor.

It is found in the cytoplasm. The catalysed reaction is ATP-dependent breakage, passage and rejoining of double-stranded DNA.. Its function is as follows. A type II topoisomerase that negatively supercoils closed circular double-stranded (ds) DNA in an ATP-dependent manner to modulate DNA topology and maintain chromosomes in an underwound state. Negative supercoiling favors strand separation, and DNA replication, transcription, recombination and repair, all of which involve strand separation. Also able to catalyze the interconversion of other topological isomers of dsDNA rings, including catenanes and knotted rings. Type II topoisomerases break and join 2 DNA strands simultaneously in an ATP-dependent manner. The sequence is that of DNA gyrase subunit B from Myxococcus xanthus.